We begin with the raw amino-acid sequence, 213 residues long: Small ribosomal subunit protein eS1 (213 aa).

The tract at residues 189 to 213 (ARPEEVAAEEETAVDVDEEDVDVEA) is disordered. A compositionally biased stretch (acidic residues) spans 194–213 (VAAEEETAVDVDEEDVDVEA).

The protein belongs to the eukaryotic ribosomal protein eS1 family.

The chain is Small ribosomal subunit protein eS1 from Haloarcula marismortui (strain ATCC 43049 / DSM 3752 / JCM 8966 / VKM B-1809) (Halobacterium marismortui).